The sequence spans 193 residues: dITP/XTP pyrophosphatase (193 aa).

Substrate is bound at residue 7–12 (SENENK). D65 (proton acceptor) is an active-site residue. Residue D65 coordinates Mg(2+). Residues S66, 144–147 (FGYD), K167, and 172–173 (HR) each bind substrate.

It belongs to the HAM1 NTPase family. Homodimer. It depends on Mg(2+) as a cofactor.

It catalyses the reaction XTP + H2O = XMP + diphosphate + H(+). The catalysed reaction is dITP + H2O = dIMP + diphosphate + H(+). The enzyme catalyses ITP + H2O = IMP + diphosphate + H(+). Pyrophosphatase that catalyzes the hydrolysis of nucleoside triphosphates to their monophosphate derivatives, with a high preference for the non-canonical purine nucleotides XTP (xanthosine triphosphate), dITP (deoxyinosine triphosphate) and ITP. Seems to function as a house-cleaning enzyme that removes non-canonical purine nucleotides from the nucleotide pool, thus preventing their incorporation into DNA/RNA and avoiding chromosomal lesions. In Tropheryma whipplei (strain TW08/27) (Whipple's bacillus), this protein is dITP/XTP pyrophosphatase.